The chain runs to 1700 residues: Rho guanine nucleotide exchange factor 28 (1700 aa).

The tract at residues 288 to 343 (TEKATMPSGAAETEEEVRNLESGRSPSEEEEDAKSIKSQVDGPSEHEDQDRLPLDR) is disordered. A phosphoserine mark is found at Ser-312 and Ser-314. The span at 330 to 343 (PSEHEDQDRLPLDR) shows a compositional bias: basic and acidic residues. Ser-478 is modified (phosphoserine). The disordered stretch occupies residues 483-532 (VADSEGEGGSEPPICYAVGSQSSPRTGLPSGDELDSFETNTEPDCNISRT). Phosphoserine is present on Ser-623. The Phorbol-ester/DAG-type zinc-finger motif lies at 651–698 (RHQFVPGTFSGVLQCSGCDKTLLGKESLQCANCKANTHKGCKDAVPPC). A DH domain is found at 846–1041 (KRQDVIFELM…KDMIAAVDLK (196 aa)). Positions 1095 to 1184 (ATGRFKDILA…NWMRRIQQAV (90 aa)) constitute a PH domain. Disordered stretches follow at residues 1184–1205 (VESC…RRKA) and 1289–1328 (KMGD…TEGT). Basic and acidic residues predominate over residues 1191–1205 (EGGRTSESDEERRKA). The segment at 1292–1301 (DVSQSSEESP) is interaction with PTK2/FAK1; required for regulation of axonal branching and synapse formation. The span at 1309 to 1325 (TPSTQDVPASPTASLVT) shows a compositional bias: polar residues. Positions 1369-1380 (IIQAIQNLTRLL) are mediates cytoplasmic retention and interaction with YWHAH. A coiled-coil region spans residues 1421 to 1522 (QEKSRYLEKQ…RERQKMRVQQ (102 aa)). An interaction with microtubules region spans residues 1421 to 1700 (QEKSRYLEKQ…DGAEENILYL (280 aa)). The tract at residues 1493 to 1524 (QLQEYQQSLERLREGQRMVERERQKMRVQQGL) is RNA-binding. Residue Ser-1535 is modified to Phosphoserine. The tract at residues 1563–1576 (FINEAFGHMSLNTS) is mediates cytoplasmic retention and interaction with MAPK8IP1. The interval 1602–1700 (SESPTELKID…DGAEENILYL (99 aa)) is disordered. The residue at position 1604 (Ser-1604) is a Phosphoserine. A compositionally biased stretch (low complexity) spans 1647–1663 (DLDSFQSESSSPQDSNQ). Residues 1664 to 1675 (RGPQPQTLTTEA) show a composition bias toward polar residues.

As to quaternary structure, homooligomer; forms some cytoplasmic aggregates. Forms a complex with MAPK8 and MAPK8IP1. Interacts with RHOA. Interacts with microtubules. Interacts with YWHAE and YWHAH. Interacts with PTK2/FAK1. Interacts with NEFL. Interacts with CTNND2; prevents interaction with RHOA. Phosphorylated on tyrosine upon stimulation of cells by laminin. As to expression, highly enriched in the brain (at protein level). Also detected in lung and kidney.

It localises to the cytoplasm. Its subcellular location is the cell membrane. Its function is as follows. Functions as a RHOA-specific guanine nucleotide exchange factor regulating signaling pathways downstream of integrins and growth factor receptors. Functions in axonal branching, synapse formation and dendritic morphogenesis. Also functions in focal adhesion formation, cell motility and B-lymphocytes activation. May regulate NEFL expression and aggregation and play a role in apoptosis. The sequence is that of Rho guanine nucleotide exchange factor 28 (Arhgef28) from Mus musculus (Mouse).